The sequence spans 76 residues: Translation initiation factor IF-1 (76 aa).

The S1-like domain occupies 1–72 (MAKKDVVVMQ…NKGRIVKREK (72 aa)).

It belongs to the IF-1 family. In terms of assembly, component of the 30S ribosomal translation pre-initiation complex which assembles on the 30S ribosome in the order IF-2 and IF-3, IF-1 and N-formylmethionyl-tRNA(fMet); mRNA recruitment can occur at any time during PIC assembly.

The protein localises to the cytoplasm. Functionally, one of the essential components for the initiation of protein synthesis. Stabilizes the binding of IF-2 and IF-3 on the 30S subunit to which N-formylmethionyl-tRNA(fMet) subsequently binds. Helps modulate mRNA selection, yielding the 30S pre-initiation complex (PIC). Upon addition of the 50S ribosomal subunit IF-1, IF-2 and IF-3 are released leaving the mature 70S translation initiation complex. The polypeptide is Translation initiation factor IF-1 (Petrotoga mobilis (strain DSM 10674 / SJ95)).